Here is a 280-residue protein sequence, read N- to C-terminus: 2-dehydro-3-deoxyphosphooctonate aldolase (280 aa).

It belongs to the KdsA family.

The protein resides in the cytoplasm. The catalysed reaction is D-arabinose 5-phosphate + phosphoenolpyruvate + H2O = 3-deoxy-alpha-D-manno-2-octulosonate-8-phosphate + phosphate. The protein operates within carbohydrate biosynthesis; 3-deoxy-D-manno-octulosonate biosynthesis; 3-deoxy-D-manno-octulosonate from D-ribulose 5-phosphate: step 2/3. Its pathway is bacterial outer membrane biogenesis; lipopolysaccharide biosynthesis. The polypeptide is 2-dehydro-3-deoxyphosphooctonate aldolase (Pseudomonas putida (strain W619)).